Here is a 330-residue protein sequence, read N- to C-terminus: MTLQQKLTQFPRLDLVGNATPLEKLSRLSDYLGREIYIKRDDVTPVALGGNKLRKLEFLAADALRQGADTLVTAGAIQSNHVRQTAAVAAKLGLHCVALLENPIGTEQANYLTNGNRLLLDLFNVDVVMCEALNDPNQQLAELATRVEAQGFRPYVVPIGGSNALGALGYVQCSLEIAAQAAGNVAFSSVVVASGSAGTHAGLAVGLQQLLPDAELIGVTVSRSADEQRPKVAQIQQALATSLGMTDPLAKITLWDSYFAPQYGMPNEEGIAAIKLLARLEGILLDPVYTGKAMAGLLDGIEQQKFCDKGPILFIHTGGAPALFAYHPQV.

N6-(pyridoxal phosphate)lysine is present on K52.

The protein belongs to the ACC deaminase/D-cysteine desulfhydrase family. As to quaternary structure, homodimer. The cofactor is pyridoxal 5'-phosphate.

It carries out the reaction D-cysteine + H2O = hydrogen sulfide + pyruvate + NH4(+) + H(+). Catalyzes the alpha,beta-elimination reaction of D-cysteine and of several D-cysteine derivatives. It could be a defense mechanism against D-cysteine. This chain is D-cysteine desulfhydrase, found in Yersinia pestis.